A 491-amino-acid chain; its full sequence is MSDLQANKDETTVDRQSSSSVDLDGPSPLRKMISVASIAAGIQFGWALQLSLLTPYVQLLGVPHKWPSFIWLCGPVSGLLVQPSVGYFSDRCTSRFGRRRPFIATGALLVAVSVVLIGYAADFGHSMGDKIDKPVKMRAVVIFALGFWILDVANNTLQGPCRAFLGDLAAGDAQKTRTANAFFSFFMAVGNVLGYAAGSYTNLYKIFPFTMTKACDIYCANLKSCFFLSITLLLVVTIIALWYVEDKQWSPKADSDNEKTPFFGEIFGAFKVMKRPMWMLLIVTALNWIAWFPFLLYDTDWMGREVYGGDSKGDDKMKKLYNQGIHVGALGLMLNSIVLGVMSLGIEGISRKMGGAKRLWGAVNIILAVCLAMTVLVTKKAEEHRRIAGPMALPTDGIRAGALTLFALLGIPLAITFSIPFALASIISSSSGAGQRLSLGVLNMAIVIPQMIVSFGVGPIDALFGDGNLPGFVVGAIAAAVSSIVAFTVLP.

Positions 1 to 13 (MSDLQANKDETTV) are enriched in basic and acidic residues. The tract at residues 1-25 (MSDLQANKDETTVDRQSSSSVDLDG) is disordered. The Cytoplasmic portion of the chain corresponds to 1-32 (MSDLQANKDETTVDRQSSSSVDLDGPSPLRKM). At Ser-17 the chain carries Phosphoserine. The chain crosses the membrane as a helical span at residues 33–53 (ISVASIAAGIQFGWALQLSLL). Topologically, residues 54–67 (TPYVQLLGVPHKWP) are extracellular. The helical transmembrane segment at 68–88 (SFIWLCGPVSGLLVQPSVGYF) threads the bilayer. The Cytoplasmic segment spans residues 89-100 (SDRCTSRFGRRR). The chain crosses the membrane as a helical span at residues 101–121 (PFIATGALLVAVSVVLIGYAA). The Extracellular segment spans residues 122–138 (DFGHSMGDKIDKPVKMR). The chain crosses the membrane as a helical span at residues 139-159 (AVVIFALGFWILDVANNTLQG). Residues 160-180 (PCRAFLGDLAAGDAQKTRTAN) lie on the Cytoplasmic side of the membrane. A helical transmembrane segment spans residues 181–201 (AFFSFFMAVGNVLGYAAGSYT). The Extracellular segment spans residues 202-223 (NLYKIFPFTMTKACDIYCANLK). A helical transmembrane segment spans residues 224–244 (SCFFLSITLLLVVTIIALWYV). Residues 245–276 (EDKQWSPKADSDNEKTPFFGEIFGAFKVMKRP) lie on the Cytoplasmic side of the membrane. Residues 277–297 (MWMLLIVTALNWIAWFPFLLY) form a helical membrane-spanning segment. At 298-323 (DTDWMGREVYGGDSKGDDKMKKLYNQ) the chain is on the extracellular side. Residues 324–344 (GIHVGALGLMLNSIVLGVMSL) form a helical membrane-spanning segment. The Cytoplasmic portion of the chain corresponds to 345–358 (GIEGISRKMGGAKR). Residues 359–379 (LWGAVNIILAVCLAMTVLVTK) form a helical membrane-spanning segment. The Extracellular portion of the chain corresponds to 380–402 (KAEEHRRIAGPMALPTDGIRAGA). The chain crosses the membrane as a helical span at residues 403–423 (LTLFALLGIPLAITFSIPFAL). At 424–443 (ASIISSSSGAGQRLSLGVLN) the chain is on the cytoplasmic side. Residues 444-464 (MAIVIPQMIVSFGVGPIDALF) form a helical membrane-spanning segment. Topologically, residues 465 to 468 (GDGN) are extracellular. A helical membrane pass occupies residues 469–489 (LPGFVVGAIAAAVSSIVAFTV). The Cytoplasmic portion of the chain corresponds to 490-491 (LP).

Belongs to the glycoside-pentoside-hexuronide (GPH) cation symporter transporter (TC 2.A.2.4) family. In terms of tissue distribution, expressed in anthers.

The protein resides in the cell membrane. The protein operates within glycan biosynthesis; sucrose metabolism. May be responsible for the transport of glucosides into the cell, with the concomitant uptake of protons (symport system). Does not seem to transport sucrose. This chain is Sucrose transport protein SUC7, found in Arabidopsis thaliana (Mouse-ear cress).